A 517-amino-acid polypeptide reads, in one-letter code: MDIVGGQNLRQMWDDLAGVYGDKTALIFESCEGIVRQFSYASLNEEINRTANLFYSLGIRKGDRVALHLDNCPEFIFCWFGLAKIGAIMVPINARLLGEESAWILQNSQVSLLVTSVQFYPMYREIRQDNSTPLNHICLIGEQLPADDGVSHFSQLQARQSATLCYTPALSTDDTAEILFTSGTTSRPKGVVITHYNLRFAGYYSAWQIALRDDDVYMTVMPAFHIDCQCTAAMPAFSAGSTFVLLEKYSARAFWDQVRRYQATVTECIPMMIRTLMVQPAAPTDRQHHLREVMFYLNLSAQEKDAFTERFGVRLLTSYGMTETIVGIIGDRPGDKRRWPSIGRVGFSYEAEIRDDQNRPLPAGEIGEICIKGIPGKTIFKEYYMQPEATAGALEPEGWLHTGDSGYQDEDGYFYFVDRRCNMIKRGGENVSCVELENIISAHPKIQDIVVVGIKDAIRDEAIKAFIVLNEGETLSEAEFFSFCENNMAKFKVPSFMEIRTDLPRNCSGKIIKKNLK.

Belongs to the ATP-dependent AMP-binding enzyme family.

The enzyme catalyses 4-(trimethylamino)butanoate + ATP + CoA = 4-(trimethylamino)butanoyl-CoA + AMP + diphosphate. It catalyses the reaction crotonobetaine + ATP + CoA = crotonobetainyl-CoA + AMP + diphosphate. The catalysed reaction is (R)-carnitine + ATP + CoA = (R)-carnitinyl-CoA + AMP + diphosphate. It functions in the pathway amine and polyamine metabolism; carnitine metabolism. In terms of biological role, catalyzes the transfer of CoA to carnitine, generating the initial carnitinyl-CoA needed for the CaiB reaction cycle. Also has activity toward crotonobetaine and gamma-butyrobetaine. In Salmonella choleraesuis (strain SC-B67), this protein is Crotonobetaine/carnitine--CoA ligase.